We begin with the raw amino-acid sequence, 427 residues long: 3-phosphoshikimate 1-carboxyvinyltransferase (427 aa).

Lysine 23, serine 24, and arginine 28 together coordinate 3-phosphoshikimate. Lysine 23 is a phosphoenolpyruvate binding site. 2 residues coordinate phosphoenolpyruvate: glycine 97 and arginine 125. Residues serine 170, serine 171, glutamine 172, serine 198, aspartate 314, asparagine 337, and lysine 341 each coordinate 3-phosphoshikimate. Glutamine 172 provides a ligand contact to phosphoenolpyruvate. Aspartate 314 serves as the catalytic Proton acceptor. 3 residues coordinate phosphoenolpyruvate: arginine 345, arginine 387, and lysine 412.

This sequence belongs to the EPSP synthase family. As to quaternary structure, monomer.

It is found in the cytoplasm. It carries out the reaction 3-phosphoshikimate + phosphoenolpyruvate = 5-O-(1-carboxyvinyl)-3-phosphoshikimate + phosphate. The protein operates within metabolic intermediate biosynthesis; chorismate biosynthesis; chorismate from D-erythrose 4-phosphate and phosphoenolpyruvate: step 6/7. In terms of biological role, catalyzes the transfer of the enolpyruvyl moiety of phosphoenolpyruvate (PEP) to the 5-hydroxyl of shikimate-3-phosphate (S3P) to produce enolpyruvyl shikimate-3-phosphate and inorganic phosphate. This Buchnera aphidicola subsp. Acyrthosiphon pisum (strain Tuc7) protein is 3-phosphoshikimate 1-carboxyvinyltransferase.